An 881-amino-acid chain; its full sequence is MSNTEKNLPTKYDHMSVEEGLYQWWLEGKYFEATGDEKKQPYTIVIPPPNVTGKLHLGHAWDTTLQDILTRTKRMQGYDVLWLPGMDHAGIATQAKVEGKLREEGISRYDLGREKFLEKAWEWKEEYASHIRQQWGKVGLGLDYSRERFTLDKGLSDAVNKVFVQLYEKGLIYRGEYIINWDPATRTALSDIEVIHKEVQGAFYHMNYPLTDGSGHIRLATTRPETMLGDTAVAVHPEDDRYKHLIGKTVTLPIVGREIPIIADEYVEKDFGTGVVKITPAHDPNDFEVGNRHDLPRILVMNEDGSMNEKAGKYNGMDRFECRKALVKDLQEAGVLVEIEPHMHSVGHSERSGAVVEPYLSTQWFVKMAPLAEKAIELQQKEEEKVTFVPDRFENTYLRWMENIHDWCISRQLWWGHRIPAWYHKETGEVYVGTEAPADIENWNQDNDVLDTWFSSALWPFSTLGWPNEDAADFKRYYSTDALVTGYDIIFFWVSRMIFQGLEFTGERPFKDVLIHGLVRDEQGRKMSKSLGNGIDPMDVIEKYGADAMRFFLSTGSAPGQDLRFSMEKVESTWNFINKIWNASRFVLMNMDDMKYEEIDLTGEKSVADKWILTRLNETIESVTRNMDKYEFGEAGRSLYNFIWDDFCDWYIEMAKLPLYGEDEAAKKTTRSILAYVLDQTMRLLHPFMPFVTEKIWQHLPHEGESITVAAWPTVREDLQDTEAAAEMHLLVDIIRSVRNIRAEVNTPMSKKVQMQIKAKDEAVLAQLTKNSSYIERFCNPSELTIQTDLQAPEKAMTAIVTGAELFLPLADLINLDEERARLEKELEKFDKEVERVQKKLSNQGFVAKAPAAVIEGERAKEQDYLEKREAVRQRLADLEK.

Residues 49 to 59 (PNVTGKLHLGH) carry the 'HIGH' region motif. A 'KMSKS' region motif is present at residues 526–530 (KMSKS). Lys529 is an ATP binding site. The stretch at 810 to 881 (LADLINLDEE…VRQRLADLEK (72 aa)) forms a coiled coil.

This sequence belongs to the class-I aminoacyl-tRNA synthetase family. ValS type 1 subfamily. In terms of assembly, monomer.

The protein localises to the cytoplasm. The catalysed reaction is tRNA(Val) + L-valine + ATP = L-valyl-tRNA(Val) + AMP + diphosphate. Its function is as follows. Catalyzes the attachment of valine to tRNA(Val). As ValRS can inadvertently accommodate and process structurally similar amino acids such as threonine, to avoid such errors, it has a 'posttransfer' editing activity that hydrolyzes mischarged Thr-tRNA(Val) in a tRNA-dependent manner. In Bacillus anthracis, this protein is Valine--tRNA ligase.